The following is a 1442-amino-acid chain: Clustered mitochondria protein homolog (1442 aa).

Disordered stretches follow at residues 38-100 (NYRN…KKPD) and 237-258 (GRSE…KDRP). Residues 82-100 (SEGEQQKDKTAAEDKKKPD) show a composition bias toward basic and acidic residues. The region spanning 394-636 (RAEDTFSSKL…RTFPPDVNFL (243 aa)) is the Clu domain. 2 stretches are compositionally biased toward basic and acidic residues: residues 696–714 (QKQE…EPKA) and 737–763 (ESKE…KVET). Disordered regions lie at residues 696–763 (QKQE…KVET) and 949–984 (SESD…SFQC). Positions 949–958 (SESDALTKSG) are enriched in polar residues. TPR repeat units follow at residues 1087-1120 (AYNF…LNNV), 1213-1246 (ALLD…NIKY), and 1248-1281 (GEKS…EKET). Residues 1373–1442 (RQKEGGTSEQ…SSNASAQQVS (70 aa)) are disordered. Over residues 1380–1390 (SEQAAAAQASQ) the composition is skewed to low complexity. Positions 1424-1442 (ASSSKQADNSSNASAQQVS) are enriched in polar residues.

This sequence belongs to the CLU family.

The protein localises to the cytoplasm. Its function is as follows. mRNA-binding protein involved in proper cytoplasmic distribution of mitochondria. The protein is Clustered mitochondria protein homolog of Aedes aegypti (Yellowfever mosquito).